A 468-amino-acid polypeptide reads, in one-letter code: ATP synthase subunit beta 3 (468 aa).

155-162 lines the ATP pocket; that stretch reads GGAGVGKT.

It belongs to the ATPase alpha/beta chains family. F-type ATPases have 2 components, CF(1) - the catalytic core - and CF(0) - the membrane proton channel. CF(1) has five subunits: alpha(3), beta(3), gamma(1), delta(1), epsilon(1). CF(0) has three main subunits: a(1), b(2) and c(9-12). The alpha and beta chains form an alternating ring which encloses part of the gamma chain. CF(1) is attached to CF(0) by a central stalk formed by the gamma and epsilon chains, while a peripheral stalk is formed by the delta and b chains.

The protein resides in the cell inner membrane. The catalysed reaction is ATP + H2O + 4 H(+)(in) = ADP + phosphate + 5 H(+)(out). Produces ATP from ADP in the presence of a proton gradient across the membrane. The catalytic sites are hosted primarily by the beta subunits. This is ATP synthase subunit beta 3 from Syntrophotalea carbinolica (strain DSM 2380 / NBRC 103641 / GraBd1) (Pelobacter carbinolicus).